A 388-amino-acid chain; its full sequence is Formate-dependent phosphoribosylglycinamide formyltransferase (388 aa).

N(1)-(5-phospho-beta-D-ribosyl)glycinamide is bound by residues 11 to 12 (EL) and glutamate 71. ATP contacts are provided by residues arginine 103, lysine 144, 149 to 154 (SSGKGQ), 184 to 187 (EEFI), and glutamate 192. Residues 108–300 (DLAAKELGLK…EFELHLRAVL (193 aa)) enclose the ATP-grasp domain. Mg(2+) contacts are provided by glutamate 257 and glutamate 270. N(1)-(5-phospho-beta-D-ribosyl)glycinamide contacts are provided by residues aspartate 277, lysine 349, and 356 to 357 (RR).

It belongs to the PurK/PurT family. In terms of assembly, homodimer.

It catalyses the reaction N(1)-(5-phospho-beta-D-ribosyl)glycinamide + formate + ATP = N(2)-formyl-N(1)-(5-phospho-beta-D-ribosyl)glycinamide + ADP + phosphate + H(+). The protein operates within purine metabolism; IMP biosynthesis via de novo pathway; N(2)-formyl-N(1)-(5-phospho-D-ribosyl)glycinamide from N(1)-(5-phospho-D-ribosyl)glycinamide (formate route): step 1/1. Involved in the de novo purine biosynthesis. Catalyzes the transfer of formate to 5-phospho-ribosyl-glycinamide (GAR), producing 5-phospho-ribosyl-N-formylglycinamide (FGAR). Formate is provided by PurU via hydrolysis of 10-formyl-tetrahydrofolate. This chain is Formate-dependent phosphoribosylglycinamide formyltransferase, found in Bacteroides thetaiotaomicron (strain ATCC 29148 / DSM 2079 / JCM 5827 / CCUG 10774 / NCTC 10582 / VPI-5482 / E50).